A 539-amino-acid chain; its full sequence is Probable K(+)/H(+) antiporter subunit D (539 aa).

A run of 14 helical transmembrane segments spans residues Trp4 to Leu23, Ala36 to Ala58, Phe78 to Leu100, Ala113 to Gly135, Leu140 to Leu162, Leu175 to Met197, Met217 to Leu239, Ala251 to Phe273, Phe283 to Ala305, Leu312 to Gly331, Met335 to Ile357, Val400 to Ile422, Ala442 to Ala464, and Val484 to Ala506.

It belongs to the CPA3 antiporters (TC 2.A.63) subunit D family. In terms of assembly, may form a hetero-oligomeric complex that consists of six subunits: PhaAB, PhaC, PhaD, PhaE, PhaF and PhaG.

Its subcellular location is the cell membrane. Its function is as follows. Part of a K(+) efflux system which is required for the adaptation of R.meliloti to alkaline pH as well as for the infection process during symbiotic nodule development. The polypeptide is Probable K(+)/H(+) antiporter subunit D (phaD) (Rhizobium meliloti (strain 1021) (Ensifer meliloti)).